Consider the following 401-residue polypeptide: Methionine import ATP-binding protein MetN (401 aa).

In terms of domain architecture, ABC transporter spans 6 to 248 (ITFDHVVKEF…PQQPVTKRFI (243 aa)). 45–52 (GYSGAGKS) lines the ATP pocket.

The protein belongs to the ABC transporter superfamily. Methionine importer (TC 3.A.1.24) family. The complex is composed of two ATP-binding proteins (MetN), two transmembrane proteins (MetI) and a solute-binding protein (MetQ).

Its subcellular location is the cell membrane. The enzyme catalyses L-methionine(out) + ATP + H2O = L-methionine(in) + ADP + phosphate + H(+). It catalyses the reaction D-methionine(out) + ATP + H2O = D-methionine(in) + ADP + phosphate + H(+). Its function is as follows. Part of the ABC transporter complex MetNIQ involved in methionine import. Responsible for energy coupling to the transport system. The protein is Methionine import ATP-binding protein MetN of Bifidobacterium longum (strain NCC 2705).